Reading from the N-terminus, the 491-residue chain is Katanin p60 ATPase-containing subunit A1 (491 aa).

Residues M1 to Y29 form an interaction with KATNB1 region. The segment at M1–S75 is interaction with dynein and NDEL1. Residues M1–T185 are interaction with microtubules. 2 positions are modified to phosphoserine; by DYRK2: S42 and S109. Positions Q87 to T185 are disordered. The span at S117–V144 shows a compositional bias: polar residues. At T133 the chain carries Phosphothreonine; by DYRK2. The span at H145–K169 shows a compositional bias: basic and acidic residues. S170 is modified (phosphoserine). G249–T256 is a binding site for ATP.

The protein belongs to the AAA ATPase family. Katanin p60 subunit A1 subfamily. Can homooligomerize into hexameric rings, which may be promoted by interaction with microtubules. Interacts with KATNB1, which may serve as a targeting subunit. Interacts with ASPM; the katanin complex formation KATNA1:KATNB1 is required for the association of ASPM. Interacts with dynein and NDEL1. Associates with the E3 ligase complex containing DYRK2, EDD/UBR5, DDB1 and DCAF1 proteins (EDVP complex). Interacts with KLHL42 (via the kelch domains). Interacts with CUL3; the interaction is enhanced by KLHL42. Interacts with KATNB1 and KATNBL1. Interacts with CAMSAP2 and CAMSAP3; leading to regulate the length of CAMSAP-decorated microtubule stretches. Phosphorylation by DYRK2 triggers ubiquitination and subsequent degradation. In terms of processing, ubiquitinated by the BCR(KLHL42) E3 ubiquitin ligase complex, leading to its proteasomal degradation. Ubiquitinated by the EDVP E3 ligase complex and subsequently targeted for proteasomal degradation.

The protein resides in the cytoplasm. It localises to the midbody. The protein localises to the cytoskeleton. It is found in the microtubule organizing center. Its subcellular location is the centrosome. The protein resides in the spindle pole. It localises to the spindle. The catalysed reaction is n ATP + n H2O + a microtubule = n ADP + n phosphate + (n+1) alpha/beta tubulin heterodimers.. With respect to regulation, ATPase activity is stimulated by microtubules, which promote homooligomerization. ATP-dependent microtubule severing is stimulated by interaction with KATNB1. Functionally, catalytic subunit of a complex which severs microtubules in an ATP-dependent manner. Microtubule severing may promote rapid reorganization of cellular microtubule arrays and the release of microtubules from the centrosome following nucleation. Microtubule release from the mitotic spindle poles may allow depolymerization of the microtubule end proximal to the spindle pole, leading to poleward microtubule flux and poleward motion of chromosome. Microtubule release within the cell body of neurons may be required for their transport into neuronal processes by microtubule-dependent motor proteins. This transport is required for axonal growth. The protein is Katanin p60 ATPase-containing subunit A1 of Homo sapiens (Human).